The chain runs to 258 residues: Protein U52 (258 aa).

This sequence belongs to the herpesviridae UL79 family.

This Human herpesvirus 6B (strain Z29) (HHV-6 variant B) protein is Protein U52 (U52).